The sequence spans 555 residues: Glutamine--tRNA ligase (555 aa).

The short motif at 35–45 (PEPNGYLHIGH) is the 'HIGH' region element. Residues 36–38 (EPN) and 42–48 (HIGHAKS) contribute to the ATP site. L-glutamine is bound by residues aspartate 68 and tyrosine 213. ATP is bound by residues threonine 232 and 262–263 (RL). The 'KMSKS' region signature appears at 269–273 (ITSKR).

The protein belongs to the class-I aminoacyl-tRNA synthetase family. In terms of assembly, monomer.

The protein localises to the cytoplasm. The enzyme catalyses tRNA(Gln) + L-glutamine + ATP = L-glutaminyl-tRNA(Gln) + AMP + diphosphate. The protein is Glutamine--tRNA ligase of Ectopseudomonas mendocina (strain ymp) (Pseudomonas mendocina).